Consider the following 1253-residue polypeptide: Latent-transforming growth factor beta-binding protein 3 (1253 aa).

Positions 1–38 (MPGPRGAAHGLAPAMRQAGALGLLALLLLALLGPGGGA) are cleaved as a signal peptide. A glycan (N-linked (GlcNAc...) asparagine) is linked at asparagine 86. An EGF-like 1 domain is found at 106 to 138 (RVVVCPLPCMNGGQCSSRNQCLCPPDFTGRFCQ). 3 disulfides stabilise this stretch: cysteine 110-cysteine 120, cysteine 114-cysteine 126, and cysteine 128-cysteine 137. Residues 244–270 (GPNAEGPASSQHLLPHPKPQHPRPPTQ) form a disordered region. Residues 274 to 328 (GRCFQDTLPKQPCGSNPLPGLTKQEDCCGSIGTAWGQSKCHKCPQLQYTGVQKPG) form the TB 1 domain. Disulfide bonds link cysteine 276/cysteine 300, cysteine 286/cysteine 313, and cysteine 301/cysteine 316. Residue asparagine 346 is glycosylated (N-linked (GlcNAc...) asparagine). The region spanning 352 to 392 (DINECAMPGMCRHGDCLNNPGSYRCVCPPGHSLGPSRTQCI) is the EGF-like 2; calcium-binding domain. Disulfide bonds link cysteine 356/cysteine 367, cysteine 362/cysteine 376, cysteine 378/cysteine 391, cysteine 402/cysteine 425, cysteine 412/cysteine 437, cysteine 426/cysteine 440, and cysteine 427/cysteine 452. The region spanning 400–452 (SLCFRLVSTEHQCQHPLTTRLTRQLCCCSVGKAWGARCQRCPADGTAAFKEIC) is the TB 2 domain. The tract at residues 475–555 (FSLFLHPDGP…PTFHRFLPDL (81 aa)) is disordered. One can recognise an EGF-like 3 domain in the interval 571 to 612 (ETDECRLNQNICGHGQCVPGPSDYSCHCNAGYRSHPQHRYCV). Intrachain disulfides connect cysteine 575–cysteine 587, cysteine 582–cysteine 596, cysteine 598–cysteine 611, cysteine 617–cysteine 629, cysteine 622–cysteine 638, cysteine 661–cysteine 673, cysteine 667–cysteine 682, cysteine 684–cysteine 698, cysteine 745–cysteine 756, cysteine 751–cysteine 765, cysteine 767–cysteine 780, cysteine 786–cysteine 797, cysteine 792–cysteine 806, cysteine 808–cysteine 821, cysteine 827–cysteine 838, cysteine 833–cysteine 847, cysteine 849–cysteine 861, cysteine 867–cysteine 880, cysteine 874–cysteine 889, cysteine 891–cysteine 904, cysteine 916–cysteine 939, cysteine 926–cysteine 951, cysteine 940–cysteine 956, cysteine 941–cysteine 968, cysteine 994–cysteine 1007, cysteine 1002–cysteine 1016, cysteine 1018–cysteine 1031, cysteine 1037–cysteine 1048, cysteine 1043–cysteine 1057, cysteine 1059–cysteine 1072, cysteine 1113–cysteine 1127, and cysteine 1114–cysteine 1136. In terms of domain architecture, EGF-like 4; calcium-binding spans 613–656 (DVNECEAEPCGPGKGICMNTGGSYNCHCNRGYRLHVGAGGRSCV). Residues 657 to 699 (DLNECTKPHLCGDGGFCINFPGHYKCNCYPGYRLKASRPPICE) enclose the EGF-like 5; calcium-binding domain. An EGF-like 6; calcium-binding domain is found at 741 to 781 (DVNECSEGTPCSPGWCENLPGSYRCTCAQGYEPAQDGLSCI). The EGF-like 7; calcium-binding domain occupies 782 to 822 (DVDECEAGKVCQDGICTNTPGSFQCQCLSGYHLSRDRSRCE). Residues 823-861 (DIDECDFPAACIGGDCINTNGSYRCLCPQGHRLVGGRKC) enclose the EGF-like 8; calcium-binding domain. Asparagine 842 carries an N-linked (GlcNAc...) asparagine glycan. Positions 863-905 (DIDECSQDPGLCLPHGACENLQGSYVCVCDEGFTLTQDQHGCE) constitute an EGF-like 9; calcium-binding domain. The region spanning 914 to 968 (KECYLNFDDTVFCDSVLATNVTQQECCCSLGAGWGDHCEIYPCPVYSSAEFHSLC) is the TB 3 domain. Residue asparagine 933 is glycosylated (N-linked (GlcNAc...) asparagine). Residues 990–1032 (DIDECILFGAEICKEGKCVNTQPGYECYCKQGFYYDGNLLECV) enclose the EGF-like 10; calcium-binding domain. The 40-residue stretch at 1033 to 1072 (DVDECLDESNCRNGVCENTRGGYRCACTPPAEYSPAQRQC) folds into the EGF-like 11; calcium-binding domain. The region spanning 1086–1136 (EVCWGQRGEDGMCMGPLAGPALTFDDCCCRQGRGWGTQCRPCPPRGTGSQC) is the TB 4 domain. Residues 1138 to 1148 (TSQSESNSFWD) are compositionally biased toward polar residues. Residues 1138–1169 (TSQSESNSFWDTSPLLLGKSPRDEDSSEEDSD) are disordered. Residues 1204-1231 (DIDECRELNQRGLLCKSERCVNTSGSFR) enclose the EGF-like 12; calcium-binding domain. 2 disulfides stabilise this stretch: cysteine 1208/cysteine 1223 and cysteine 1218/cysteine 1232. Asparagine 1225 carries N-linked (GlcNAc...) asparagine glycosylation.

Belongs to the LTBP family. As to quaternary structure, forms part of the large latent transforming growth factor beta (TGFB1) precursor complex; removal is essential for activation of complex. Interacts with EFEMP2. In terms of processing, contains hydroxylated asparagine residues. Post-translationally, two intrachain disulfide bonds from the TB3 domain are rearranged upon TGFB1 binding, and form interchain bonds with TGFB1 propeptide, anchoring it to the extracellular matrix.

Its subcellular location is the secreted. The protein resides in the extracellular space. The protein localises to the extracellular matrix. Functionally, key regulator of transforming growth factor beta (TGFB1, TGFB2 and TGFB3) that controls TGF-beta activation by maintaining it in a latent state during storage in extracellular space. Associates specifically via disulfide bonds with the Latency-associated peptide (LAP), which is the regulatory chain of TGF-beta, and regulates integrin-dependent activation of TGF-beta. The polypeptide is Latent-transforming growth factor beta-binding protein 3 (Ltbp3) (Mus musculus (Mouse)).